The chain runs to 156 residues: Small ribosomal subunit protein uS7 (156 aa).

It belongs to the universal ribosomal protein uS7 family. In terms of assembly, part of the 30S ribosomal subunit. Contacts proteins S9 and S11.

Its function is as follows. One of the primary rRNA binding proteins, it binds directly to 16S rRNA where it nucleates assembly of the head domain of the 30S subunit. Is located at the subunit interface close to the decoding center, probably blocks exit of the E-site tRNA. This Brucella anthropi (strain ATCC 49188 / DSM 6882 / CCUG 24695 / JCM 21032 / LMG 3331 / NBRC 15819 / NCTC 12168 / Alc 37) (Ochrobactrum anthropi) protein is Small ribosomal subunit protein uS7.